Here is a 623-residue protein sequence, read N- to C-terminus: MKTFTSALALVVGMLAPGAVVAAPPSTPAQRDLVELREARQEGGKDLRPREPTCNTPSNRACWSDGFDINTDYEVSTPDTGVTQSYVFNLTEVDNWMGPDGVVKEKVMLINGNIMGPNIVANWGDTVEVTVINNLVTNGTSIHWHGIHQKDTNLHDGANGVTECPIPPKGGQRTYRWRARQYGTSWYHSHFSAQYGNGVVGTIQINGPASLPYDIDLGVFPITDYYYRAADDLVHFTQNNAPPFSDNVLINGTAVNPNTGEGQYANVTLTPGKRHRLRILNTSTENHFQVSLVNHTMTVIAADMVPVNAMTVDSLFLAVGQRYDVVIDASRAPDNYWFNVTFGGQAACGGSLNPHPAAIFHYAGAPGGLPTDEGTPPVDHQCLDTLDVRPVVPRSVPVNSFVKRPDNTLPVALDLTGTPLFVWKVNGSDINVDWGKPIIDYILTGNTSYPVSDNIVQVDAVDQWTYWLIENDPEGPFSLPHPMHLHGHDFLVLGRSPDVPAASQQRFVFDPAVDLARLNGDNPPRRDTTMLPAGGWLLLAFRTDNPGAWLFHCHIAWHVSGGLSVDFLERPADLRQRISQEDEDDFNRVCDEWRAYWPTNPYPKIDSGLKRRRWVEESEWLVR.

Residues 1–22 (MKTFTSALALVVGMLAPGAVVA) form the signal peptide. Residues 23 to 50 (APPSTPAQRDLVELREARQEGGKDLRPR) constitute a propeptide that is removed on maturation. C54 and C62 are joined by a disulfide. N-linked (GlcNAc...) asparagine glycosylation is found at N89 and N138. H143, H145, H188, and H190 together coordinate Cu cation. Disulfide bonds link C164–C590 and C348–C382. 4 N-linked (GlcNAc...) asparagine glycosylation sites follow: N251, N266, N294, and N339. N426 and N446 each carry an N-linked (GlcNAc...) asparagine glycan. Cu cation contacts are provided by H481, H484, H486, H552, C553, H554, and H558. Positions 610 to 623 (KRRRWVEESEWLVR) are excised as a propeptide.

It belongs to the multicopper oxidase family. In terms of assembly, monomer. Cu cation is required as a cofactor. As to expression, secreted protein; extracellular space.

The catalysed reaction is 4 hydroquinone + O2 = 4 benzosemiquinone + 2 H2O. In terms of biological role, lignin degradation and detoxification of lignin-derived products. This Melanocarpus albomyces protein is Laccase-1 (LAC1).